Reading from the N-terminus, the 120-residue chain is NAD(P)H-quinone oxidoreductase subunit 3, chloroplastic (120 aa).

A run of 3 helical transmembrane segments spans residues 9–29, 64–84, and 88–108; these read IFWA…LISG, MFAL…PWAM, and VLGV…IVGS.

It belongs to the complex I subunit 3 family. NDH is composed of at least 16 different subunits, 5 of which are encoded in the nucleus.

The protein resides in the plastid. The protein localises to the chloroplast thylakoid membrane. The catalysed reaction is a plastoquinone + NADH + (n+1) H(+)(in) = a plastoquinol + NAD(+) + n H(+)(out). It carries out the reaction a plastoquinone + NADPH + (n+1) H(+)(in) = a plastoquinol + NADP(+) + n H(+)(out). Its function is as follows. NDH shuttles electrons from NAD(P)H:plastoquinone, via FMN and iron-sulfur (Fe-S) centers, to quinones in the photosynthetic chain and possibly in a chloroplast respiratory chain. The immediate electron acceptor for the enzyme in this species is believed to be plastoquinone. Couples the redox reaction to proton translocation, and thus conserves the redox energy in a proton gradient. The polypeptide is NAD(P)H-quinone oxidoreductase subunit 3, chloroplastic (Phaseolus vulgaris (Kidney bean)).